Here is a 708-residue protein sequence, read N- to C-terminus: Vertnin (708 aa).

2 disordered regions span residues 473-499 (PWKG…FLPP) and 561-636 (APAL…PVAE). The segment covering 568–582 (GLREAKEKQEKEAGR) has biased composition (basic and acidic residues).

It belongs to the vertnin family.

The chain is Vertnin (VRTN) from Ailuropoda melanoleuca (Giant panda).